We begin with the raw amino-acid sequence, 387 residues long: Alpha-maltose-1-phosphate synthase (387 aa).

This sequence belongs to the glycosyltransferase group 1 family.

The enzyme catalyses ADP-alpha-D-glucose + alpha-D-glucose 1-phosphate = alpha-maltose 1-phosphate + ADP + H(+). It functions in the pathway capsule biogenesis; capsule polysaccharide biosynthesis. It participates in glycan biosynthesis; glycogen biosynthesis. In terms of biological role, involved in the biosynthesis of the maltose-1-phosphate (M1P) building block required for alpha-glucan production by the key enzyme GlgE. Catalyzes the formation of an alpha-1,4 linkage between glucose from ADP-glucose and glucose 1-phosphate (G1P) to yield maltose-1-phosphate (M1P). The chain is Alpha-maltose-1-phosphate synthase from Mycobacterium tuberculosis (strain CDC 1551 / Oshkosh).